Here is a 582-residue protein sequence, read N- to C-terminus: Poly(A) RNA polymerase, mitochondrial (582 aa).

A mitochondrion-targeting transit peptide spans 1-37 (MAVPGVGLLTRLNLCARRRTRVQRPIVRLLSCPGTVA). At Lys90 the chain carries N6-acetyllysine. ATP is bound by residues 107 to 109 (YES) and 241 to 242 (GC). Mg(2+)-binding residues include Asp243 and Asp245. In terms of domain architecture, PAP-associated spans 437–483 (LELLLKEFFEYFGNFAFDKNSINIRQGREQNKPDSSPLYIQNPFETS).

It belongs to the DNA polymerase type-B-like family. Homodimer. Requires Mg(2+) as cofactor. It depends on Mn(2+) as a cofactor. As to expression, ubiquitous, with stronger expression in tissues with high energy requirements: heart, brain, and skeletal muscle.

The protein localises to the cytoplasm. Its subcellular location is the mitochondrion. It catalyses the reaction RNA(n) + ATP = RNA(n)-3'-adenine ribonucleotide + diphosphate. In terms of biological role, polymerase that creates the 3' poly(A) tail of mitochondrial transcripts. Can use all four nucleotides, but has higher activity with ATP and UTP (in vitro). Plays a role in replication-dependent histone mRNA degradation. May be involved in the terminal uridylation of mature histone mRNAs before their degradation is initiated. Might be responsible for the creation of some UAA stop codons which are not encoded in mtDNA. The protein is Poly(A) RNA polymerase, mitochondrial (MTPAP) of Homo sapiens (Human).